Here is a 309-residue protein sequence, read N- to C-terminus: Porphobilinogen deaminase (309 aa).

An S-(dipyrrolylmethanemethyl)cysteine modification is found at C241.

The protein belongs to the HMBS family. In terms of assembly, monomer. Dipyrromethane is required as a cofactor.

The catalysed reaction is 4 porphobilinogen + H2O = hydroxymethylbilane + 4 NH4(+). It participates in porphyrin-containing compound metabolism; protoporphyrin-IX biosynthesis; coproporphyrinogen-III from 5-aminolevulinate: step 2/4. In terms of biological role, tetrapolymerization of the monopyrrole PBG into the hydroxymethylbilane pre-uroporphyrinogen in several discrete steps. The chain is Porphobilinogen deaminase from Bacillus cereus (strain G9842).